Consider the following 191-residue polypeptide: Small ribosomal subunit protein eS7z (191 aa).

Position 1 is an N-acetylmethionine (Met1). Residues 15-50 (ELSELDEQVAQAFFDLENTNQELKSELKDLYVNSAV) are a coiled coil.

It belongs to the eukaryotic ribosomal protein eS7 family.

The polypeptide is Small ribosomal subunit protein eS7z (RPS7A) (Arabidopsis thaliana (Mouse-ear cress)).